Reading from the N-terminus, the 382-residue chain is D-galactonate dehydratase (382 aa).

Aspartate 183 serves as a coordination point for Mg(2+). Histidine 185 functions as the Proton donor in the catalytic mechanism. Mg(2+) contacts are provided by glutamate 209 and glutamate 235. The active-site Proton acceptor is histidine 285. Residues 361-382 (NENPPDWRNPVWRHSDGSIAEW) are disordered.

It belongs to the mandelate racemase/muconate lactonizing enzyme family. GalD subfamily. Mg(2+) serves as cofactor.

The catalysed reaction is D-galactonate = 2-dehydro-3-deoxy-D-galactonate + H2O. It participates in carbohydrate acid metabolism; D-galactonate degradation; D-glyceraldehyde 3-phosphate and pyruvate from D-galactonate: step 1/3. Its function is as follows. Catalyzes the dehydration of D-galactonate to 2-keto-3-deoxy-D-galactonate. This Xanthomonas oryzae pv. oryzae (strain MAFF 311018) protein is D-galactonate dehydratase.